A 1996-amino-acid polypeptide reads, in one-letter code: Non-reducing polyketide synthase atnG (1996 aa).

The tract at residues 9-245 (FLFGDQADAP…AELPAFGAVH (237 aa)) is N-terminal acylcarrier protein transacylase (SAT) domain. Residues 366 to 794 (SGSVAVIGMS…GGNSCFVLEE (429 aa)) form the Ketosynthase family 3 (KS3) domain. Catalysis depends on for beta-ketoacyl synthase activity residues Cys538, His673, and His713. The malonyl-CoA:ACP transacylase (MAT) domain stretch occupies residues 891–1150 (AFAFTGQGAH…VKYTQAISHC (260 aa)). Ser982 functions as the For acyl/malonyl transferase activity in the catalytic mechanism. Residues 1263-1392 (HHLVSQDDNG…CCIRQTDEQD (130 aa)) are N-terminal hotdog fold. A PKS/mFAS DH domain is found at 1263–1569 (HHLVSQDDNG…FRKMPRTTLH (307 aa)). The tract at residues 1267 to 1568 (SQDDNGKEQS…RFRKMPRTTL (302 aa)) is product template (PT) domain. The Proton acceptor; for dehydratase activity role is filled by His1295. The segment at 1416–1569 (ASGIANRFQG…FRKMPRTTLH (154 aa)) is C-terminal hotdog fold. The active-site Proton donor; for dehydratase activity is Asp1481. Residues 1573 to 1621 (GKAVPPKPAKETSHPSVEATAPATTNGRSSATNAQAEAPAPPVNGSNGH) are disordered. The span at 1594–1607 (PATTNGRSSATNAQ) shows a compositional bias: polar residues. The Carrier domain maps to 1620–1697 (GHRKTVESVL…DAQRQLRTLE (78 aa)). Residue Ser1657 is modified to O-(pantetheine 4'-phosphoryl)serine. The thioesterase (TE) domain stretch occupies residues 1725–1923 (KRECNVVLMQ…ERTFVVWAKK (199 aa)).

It participates in secondary metabolite biosynthesis; terpenoid biosynthesis. In terms of biological role, non-reducing polyketide synthase; part of the gene cluster that mediates the biosynthesis of the meroterpenoids arthripenoids. The pathway begins with the HR-PKS atnH that catalyzes two chain-extension steps to form a reduced triketide, which then primes the SAT domain in the NR-PKS atnG to initiate three more cycles of extension to give a linear hexaketide corresponding to the polyketide part of arthripenoids. The FAD-dependent monooxygenase atnJ then performs an oxidative decarboxylation at C11 of the atnH/atnG product, via an electrophilic aromatic hydroxylation with concomitant ipso-decarboxylation. The membrane-bound polyprenyl transferase atnF then introduces a farnesyl group before the FAD-dependent monooxygenase atnK functions as the first epoxidase on terminal C12'-C13' olefin, followed by a second epoxidation on C7'-C8' catalyzed by atnA. The terpene cyclase/mutase atnI then initiates the sequential tricyclic ring formation through protonation of the terminal epoxide and catalyzes the regioselective and stereoselective 6/6/6-tricyclic ring formation. The cytochrome P450 monooxygenase atnM is responsible for hydroxylating both C1' and C10'. The next steps may involve ketoreduction and acetyl transfer by the ketoreductase atnB and the acetyltransferase atnC, and lead to the production of arthripenoid B, the final biosynthetic product of the atn cluster. The hydroquinone moiety in arthripenoid B is prone to undergo spontaneous oxidation to afford a benzoquinone compound, a key intermediate for generating structure diversity. For instance, addition of a cysteine followed by ring contraction gives arthripenoid A, tautomerization gives the main product arthripenoid C, addition of a molecular of water or amine affords arthripenoid D or E, respectively, and loss of one water forms arthripenoid F. The protein is Non-reducing polyketide synthase atnG of Arthrinium sp.